A 462-amino-acid polypeptide reads, in one-letter code: Cysteine--tRNA ligase (462 aa).

A Zn(2+)-binding site is contributed by C30. The short motif at 32–42 (MTVYDYCHVGH) is the 'HIGH' region element. The Zn(2+) site is built by C214, H239, and E243. Residues 271-275 (KMSKS) carry the 'KMSKS' region motif. K274 is an ATP binding site.

This sequence belongs to the class-I aminoacyl-tRNA synthetase family. In terms of assembly, monomer. Zn(2+) serves as cofactor.

It is found in the cytoplasm. The catalysed reaction is tRNA(Cys) + L-cysteine + ATP = L-cysteinyl-tRNA(Cys) + AMP + diphosphate. The chain is Cysteine--tRNA ligase from Cupriavidus necator (strain ATCC 17699 / DSM 428 / KCTC 22496 / NCIMB 10442 / H16 / Stanier 337) (Ralstonia eutropha).